The sequence spans 440 residues: Amino acid transporter AVT6D (440 aa).

A run of 11 helical transmembrane segments spans residues Phe26 to Pro46, Ala47 to Leu67, Ala102 to Ile122, Trp149 to Leu169, Ile182 to Leu202, Gly219 to Phe239, Ile262 to Phe282, Ile309 to Leu329, Phe356 to Phe376, Gln377 to Leu397, and Ile410 to Asn430.

This sequence belongs to the amino acid/polyamine transporter 2 family. Amino acid/auxin permease (AAAP) (TC 2.A.18.6) subfamily.

It is found in the membrane. The polypeptide is Amino acid transporter AVT6D (Arabidopsis thaliana (Mouse-ear cress)).